Reading from the N-terminus, the 1007-residue chain is Probable inorganic carbon transporter subunit DabA (1007 aa).

The Zn(2+) site is built by cysteine 442, aspartate 444, histidine 696, and cysteine 711.

This sequence belongs to the inorganic carbon transporter (TC 9.A.2) DabA family. Forms a complex with DabB. Zn(2+) is required as a cofactor.

It is found in the cell inner membrane. Functionally, part of an energy-coupled inorganic carbon pump. The chain is Probable inorganic carbon transporter subunit DabA from Aquifex aeolicus (strain VF5).